Reading from the N-terminus, the 288-residue chain is Small ribosomal subunit protein uS9m (288 aa).

Positions 269 to 288 (VERKKPGKKKARKMPTWVKR) are disordered.

This sequence belongs to the universal ribosomal protein uS9 family.

It localises to the mitochondrion. The protein is Small ribosomal subunit protein uS9m (MRPS9) of Candida glabrata (strain ATCC 2001 / BCRC 20586 / JCM 3761 / NBRC 0622 / NRRL Y-65 / CBS 138) (Yeast).